The primary structure comprises 501 residues: Type II secretion system protein E (501 aa).

262-269 (GPTGSGKS) serves as a coordination point for ATP. The Zn(2+) site is built by cysteine 395, cysteine 398, cysteine 428, and cysteine 431.

It belongs to the GSP E family. In terms of assembly, forms homooligomers; most probably hexamers. Interacts with ExeL/GspL. The cofactor is Zn(2+).

The protein localises to the cell inner membrane. It carries out the reaction ATP + H2O + cellular proteinSide 1 = ADP + phosphate + cellular proteinSide 2.. ATPase component of the type II secretion system required for the energy-dependent secretion of extracellular factors such as proteases and toxins from the periplasm. Acts as a molecular motor to provide the energy that is required for assembly of the pseudopilus and the extrusion of substrates generated in the cytoplasm. The sequence is that of Type II secretion system protein E (exeE) from Aeromonas hydrophila.